Here is a 100-residue protein sequence, read N- to C-terminus: MDLSPREKDKLLIFTAGLVAERRLARGVKLNYPEAMAYISAALLEGARDGQTVAELMHFGTTLLSREQVMEGVPEMIPEIQIEATFPDGTKLVTVHQPIA.

This sequence belongs to the urease gamma subunit family. Heterotrimer of UreA (gamma), UreB (beta) and UreC (alpha) subunits. Three heterotrimers associate to form the active enzyme.

The protein resides in the cytoplasm. It catalyses the reaction urea + 2 H2O + H(+) = hydrogencarbonate + 2 NH4(+). It functions in the pathway nitrogen metabolism; urea degradation; CO(2) and NH(3) from urea (urease route): step 1/1. This is Urease subunit gamma from Ectopseudomonas mendocina (strain ymp) (Pseudomonas mendocina).